The chain runs to 963 residues: Kinesin-1 heavy chain (963 aa).

Residue alanine 2 is modified to N-acetylalanine. Residues 8-325 enclose the Kinesin motor domain; the sequence is NIKVMCRFRP…LLFGQRAKTI (318 aa). ATP is bound at residue 85–92; sequence GQTSSGKT. Lysine 213 is covalently cross-linked (Glycyl lysine isopeptide (Lys-Gly) (interchain with G-Cter in SUMO2)). A coiled-coil region spans residues 330–913; the sequence is CVNVELTAEQ…EAVRSKNMAR (584 aa). Positions 908–963 are disordered; it reads SKNMARRGHSAQIAKPIRPGQHPAASPTHPGAVRGGGSFVQNNQPVGLRGGGGKQA. Positions 915-963 are globular; that stretch reads GHSAQIAKPIRPGQHPAASPTHPGAVRGGGSFVQNNQPVGLRGGGGKQA. Serine 933 and serine 945 each carry phosphoserine. At arginine 956 the chain carries Omega-N-methylarginine.

This sequence belongs to the TRAFAC class myosin-kinesin ATPase superfamily. Kinesin family. Kinesin subfamily. Oligomer composed of two heavy chains and two light chains. Interacts with GRIP1 and PPP1R42. Interacts with SYBU. Interacts with JAKMIP1. Interacts with PLEKHM2. Interacts with ECPAS. Interacts with ZFYVE27. Found in a complex with OGT, RHOT1, RHOT2 and TRAK1. Interacts with APP (via cytoplasmic domain). In terms of tissue distribution, expressed in the brain (at protein level). Expressed in the brain, liver, kidney, spleen, heart, lung and sciatic nerve.

The protein resides in the cytoplasm. Its subcellular location is the cytoskeleton. The protein localises to the cytolytic granule membrane. It localises to the lysosome membrane. Functionally, microtubule-dependent motor required for normal distribution of mitochondria and lysosomes. Can induce formation of neurite-like membrane protrusions in non-neuronal cells in a ZFYVE27-dependent manner. Regulates centrosome and nuclear positioning during mitotic entry. During the G2 phase of the cell cycle in a BICD2-dependent manner, antagonizes dynein function and drives the separation of nuclei and centrosomes. Required for anterograde axonal transportation of MAPK8IP3/JIP3 which is essential for MAPK8IP3/JIP3 function in axon elongation. Through binding with PLEKHM2 and ARL8B, directs lysosome movement toward microtubule plus ends. Involved in NK cell-mediated cytotoxicity. Drives the polarization of cytolytic granules and microtubule-organizing centers (MTOCs) toward the immune synapse between effector NK lymphocytes and target cells. The chain is Kinesin-1 heavy chain from Rattus norvegicus (Rat).